A 305-amino-acid chain; its full sequence is GTPase Era (305 aa).

The Era-type G domain maps to Arg-13–Glu-181. The G1 stretch occupies residues Gly-21–Ser-28. Gly-21–Ser-28 is a GTP binding site. Residues Gln-47–His-51 are G2. A G3 region spans residues Asp-68–Gly-71. GTP is bound by residues Asp-68–Leu-72 and Asn-130–Asp-133. Positions Asn-130 to Asp-133 are G4. Residues Ile-160–Ala-162 are G5. Residues Val-204 to Gly-288 enclose the KH type-2 domain.

The protein belongs to the TRAFAC class TrmE-Era-EngA-EngB-Septin-like GTPase superfamily. Era GTPase family. As to quaternary structure, monomer.

The protein localises to the cytoplasm. It localises to the cell inner membrane. An essential GTPase that binds both GDP and GTP, with rapid nucleotide exchange. Plays a role in 16S rRNA processing and 30S ribosomal subunit biogenesis and possibly also in cell cycle regulation and energy metabolism. The polypeptide is GTPase Era (Pseudomonas aeruginosa (strain LESB58)).